The chain runs to 58 residues: uncharacterized protein (58 aa).

The helical transmembrane segment at 12-32 (VALVYISVYFFSCISLIVYFF) threads the bilayer.

It is found in the membrane. This is an uncharacterized protein from Saccharomyces cerevisiae (strain ATCC 204508 / S288c) (Baker's yeast).